Consider the following 142-residue polypeptide: Large ribosomal subunit protein bL27m (142 aa).

The interval 27 to 48 (TKKSAGSTKNGRTSQPKNLGLK) is disordered. The segment covering 30–43 (SAGSTKNGRTSQPK) has biased composition (polar residues).

Belongs to the bacterial ribosomal protein bL27 family.

Its subcellular location is the mitochondrion. The sequence is that of Large ribosomal subunit protein bL27m (mrpl27) from Dictyostelium discoideum (Social amoeba).